Consider the following 400-residue polypeptide: Enoyl-[acyl-carrier-protein] reductase [NADH] 2 (400 aa).

Residues 48–53, 75–76, 112–113, and 141–142 contribute to the NAD(+) site; these read GASSGF, FE, DA, and LA. Y228 is a substrate binding site. Y238 acts as the Proton donor in catalysis. Residues K247 and 276-278 each bind NAD(+); that span reads LVT.

The protein belongs to the TER reductase family. Monomer.

The enzyme catalyses a 2,3-saturated acyl-[ACP] + NAD(+) = a (2E)-enoyl-[ACP] + NADH + H(+). It functions in the pathway lipid metabolism; fatty acid biosynthesis. Its function is as follows. Involved in the final reduction of the elongation cycle of fatty acid synthesis (FAS II). Catalyzes the reduction of a carbon-carbon double bond in an enoyl moiety that is covalently linked to an acyl carrier protein (ACP). This Vibrio vulnificus (strain YJ016) protein is Enoyl-[acyl-carrier-protein] reductase [NADH] 2.